Consider the following 380-residue polypeptide: Aprataxin (380 aa).

Residues 36–85 (PVIIGRTPELGITDKLCSRSQLELTSNCYKRYVLVKRLGANTSQINGIDI) form the FHA-like domain. Positions 176–207 (VYAFDSPSPMSSRCEKKAESNKRAPTHKHWSQ) are disordered. Basic and acidic residues predominate over residues 188–197 (RCEKKAESNK). In terms of domain architecture, HIT spans 206–312 (SQGLKASMED…ISQDFQSSSF (107 aa)). Interaction with DNA substrate stretches follow at residues 231-235 (DKYPK) and 294-295 (SM). The short motif at 297–301 (QMHMH) is the Histidine triad motif element. The active-site Tele-AMP-histidine intermediate is the H299. A C2H2-type; atypical zinc finger spans residues 356 to 378 (LKCHRCKKPQKNIPTLKKHIDSC).

It localises to the nucleus. Its subcellular location is the nucleoplasm. It is found in the nucleolus. The catalysed reaction is a 5'-end adenosine-5'-diphospho-5'-2'-deoxyribonucleoside-DNA + H2O = a 5'-end 5'-phospho-2'-deoxyribonucleoside-DNA + AMP + 2 H(+). It catalyses the reaction a 5'-end adenosine-5'-diphospho-5'-ribonucleoside-2'-deoxyribonucleotide-DNA + H2O = a 5'-end 5'-phospho-ribonucleoside-2'-deoxyribonucleotide-DNA + AMP + 2 H(+). The enzyme catalyses a 3'-end 2'-deoxyribonucleotide-3'-diphospho-5'-guanosine-DNA + H2O = a 3'-end 2'-deoxyribonucleotide 3'-phosphate-DNA + GMP + 2 H(+). In terms of biological role, DNA-binding protein involved in single-strand DNA break repair, double-strand DNA break repair and base excision repair. Resolves abortive DNA ligation intermediates formed either at base excision sites, or when DNA ligases attempt to repair non-ligatable breaks induced by reactive oxygen species. Catalyzes the release of adenylate groups covalently linked to 5'-phosphate termini, resulting in the production of 5'-phosphate termini that can be efficiently rejoined. Also able to hydrolyze adenosine 5'-monophosphoramidate (AMP-NH(2)) and diadenosine tetraphosphate (AppppA), but with lower catalytic activity. Likewise, catalyzes the release of 3'-linked guanosine (DNAppG) and inosine (DNAppI) from DNA, but has higher specific activity with 5'-linked adenosine (AppDNA). The polypeptide is Aprataxin (APTX) (Ciona intestinalis (Transparent sea squirt)).